Reading from the N-terminus, the 414-residue chain is uncharacterized protein (414 aa).

Disordered stretches follow at residues 136-168, 298-322, and 350-382; these read SSKS…TVPT, KNFP…SYHR, and PPHS…MSTS.

This is an uncharacterized protein from Macaca fascicularis (Crab-eating macaque).